Here is a 151-residue protein sequence, read N- to C-terminus: Lipoprotein signal peptidase (151 aa).

Helical transmembrane passes span 33–53 (VIPDFFHLTYVLNPGAAFGLL), 58–78 (WIFIPAAIIVCAGIIYAQFKI), and 87–107 (LTLGLIGGGALGNLYDRLFIG). Active-site residues include Asp111 and Asp126. A helical membrane pass occupies residues 120-140 (FVFNFADSAIVVGVGLLMILM).

Belongs to the peptidase A8 family.

The protein localises to the cell membrane. The enzyme catalyses Release of signal peptides from bacterial membrane prolipoproteins. Hydrolyzes -Xaa-Yaa-Zaa-|-(S,diacylglyceryl)Cys-, in which Xaa is hydrophobic (preferably Leu), and Yaa (Ala or Ser) and Zaa (Gly or Ala) have small, neutral side chains.. Its pathway is protein modification; lipoprotein biosynthesis (signal peptide cleavage). Its function is as follows. This protein specifically catalyzes the removal of signal peptides from prolipoproteins. This chain is Lipoprotein signal peptidase, found in Desulfitobacterium hafniense (strain DSM 10664 / DCB-2).